The sequence spans 243 residues: Cell division protein ZipA (243 aa).

Topologically, residues 1–4 (MSDV) are periplasmic. A helical transmembrane segment spans residues 5–25 (TLLRIGIAIVGILFVAAVFFF). The Cytoplasmic segment spans residues 26-243 (STPKTSAHRV…VPPLIKNSRW (218 aa)). The disordered stretch occupies residues 32 to 89 (AHRVRTKKEEPPRERREPMLSTEADNSPPQGVDEVPASVSQQQVNPEANKPGEVQLGK). Residues 38–49 (KKEEPPRERREP) are compositionally biased toward basic and acidic residues.

The protein belongs to the ZipA family. As to quaternary structure, interacts with FtsZ via their C-terminal domains.

It is found in the cell inner membrane. Its function is as follows. Essential cell division protein that stabilizes the FtsZ protofilaments by cross-linking them and that serves as a cytoplasmic membrane anchor for the Z ring. Also required for the recruitment to the septal ring of downstream cell division proteins. The protein is Cell division protein ZipA of Xylella fastidiosa (strain 9a5c).